The following is a 527-amino-acid chain: uncharacterized protein (527 aa).

Residues 1–93 (MSYMIAVPDM…AGAYASAEAT (93 aa)) enclose the PE domain. 3 stretches are compositionally biased toward gly residues: residues 264-286 (IHGHGGVGGDGGTGGQGGDGVQG), 292-384 (GAAG…AGNG), and 472-515 (NGGD…GGSR). Disordered regions lie at residues 264–384 (IHGH…AGNG) and 472–527 (NGGD…TPGQ).

It belongs to the mycobacterial PE family. PGRS subfamily.

This is an uncharacterized protein from Mycobacterium tuberculosis (strain CDC 1551 / Oshkosh).